Reading from the N-terminus, the 498-residue chain is Glycylpeptide N-tetradecanoyltransferase 2 (498 aa).

The interval 1-87 is disordered; it reads MAEDSESAAS…QPPSKNSTIP (87 aa). Positions 15–32 are enriched in acidic residues; it reads ELDDQDTCGIDGDNEEET. Residue Ser38 is modified to Phosphoserine. Positions 46–57 are enriched in basic residues; it reads KKKKKKQKRKKE. Residues 61–72 are compositionally biased toward polar residues; sequence SGGTKSDSASDS. The tetradecanoyl-CoA site is built by His117, Trp122, Leu250, Val252, Ser258, Arg260, Val261, and Ala262.

Belongs to the NMT family.

It is found in the cytoplasm. The protein resides in the membrane. The enzyme catalyses N-terminal glycyl-[protein] + tetradecanoyl-CoA = N-tetradecanoylglycyl-[protein] + CoA + H(+). The catalysed reaction is N-terminal glycyl-L-lysyl-[protein] + tetradecanoyl-CoA = N-terminal glycyl-(N(6)-tetradecanoyl)-L-lysyl-[protein] + CoA + H(+). Functionally, adds a myristoyl group to the N-terminal glycine residue of certain cellular and viral proteins. Also able to mediate N-terminal lysine myristoylation of proteins: catalyzes myristoylation of ARF6 on both 'Gly-2' and 'Lys-3'. Lysine myristoylation is required to maintain ARF6 on membranes during the GTPase cycle. This Bos taurus (Bovine) protein is Glycylpeptide N-tetradecanoyltransferase 2 (NMT2).